Consider the following 227-residue polypeptide: Ribonuclease 3 (227 aa).

One can recognise an RNase III domain in the interval 6-128 (ASDYQQRIGY…VIAAIYLDAD (123 aa)). Position 41 (glutamate 41) interacts with Mg(2+). Aspartate 45 is an active-site residue. The Mg(2+) site is built by aspartate 114 and glutamate 117. Glutamate 117 is an active-site residue. The DRBM domain maps to 155–225 (DPKTRLQEWL…ASHAIDQLDS (71 aa)). Residues 203–212 (GEGSSRRLAE) are compositionally biased toward basic and acidic residues. A disordered region spans residues 203 to 227 (GEGSSRRLAEQDAASHAIDQLDSNK).

The protein belongs to the ribonuclease III family. As to quaternary structure, homodimer. It depends on Mg(2+) as a cofactor.

It is found in the cytoplasm. It carries out the reaction Endonucleolytic cleavage to 5'-phosphomonoester.. Digests double-stranded RNA. Involved in the processing of primary rRNA transcript to yield the immediate precursors to the large and small rRNAs (23S and 16S). Processes some mRNAs, and tRNAs when they are encoded in the rRNA operon. Processes pre-crRNA and tracrRNA of type II CRISPR loci if present in the organism. The chain is Ribonuclease 3 from Xylella fastidiosa (strain 9a5c).